Consider the following 147-residue polypeptide: Large ribosomal subunit protein uL15 (147 aa).

Positions 1–62 (MDLSNLRPAI…GQMPLQRRLP (62 aa)) are disordered. 2 stretches are compositionally biased toward gly residues: residues 21–31 (RGPGSGNGKTA) and 42–52 (SGGGVKPGFEG).

The protein belongs to the universal ribosomal protein uL15 family. Part of the 50S ribosomal subunit.

Functionally, binds to the 23S rRNA. This is Large ribosomal subunit protein uL15 from Syntrophotalea carbinolica (strain DSM 2380 / NBRC 103641 / GraBd1) (Pelobacter carbinolicus).